Consider the following 199-residue polypeptide: Dephospho-CoA kinase (199 aa).

In terms of domain architecture, DPCK spans 11–199 (RIGLTGGIAS…DLHDQLDALL (189 aa)). Residue 19-24 (ASGKSS) coordinates ATP.

Belongs to the CoaE family.

It localises to the cytoplasm. It catalyses the reaction 3'-dephospho-CoA + ATP = ADP + CoA + H(+). Its pathway is cofactor biosynthesis; coenzyme A biosynthesis; CoA from (R)-pantothenate: step 5/5. In terms of biological role, catalyzes the phosphorylation of the 3'-hydroxyl group of dephosphocoenzyme A to form coenzyme A. The protein is Dephospho-CoA kinase of Synechococcus sp. (strain CC9902).